Here is a 320-residue protein sequence, read N- to C-terminus: Aspartate carbamoyltransferase catalytic subunit (320 aa).

Arg53 and Thr54 together coordinate carbamoyl phosphate. Lys82 provides a ligand contact to L-aspartate. Positions 103, 131, and 134 each coordinate carbamoyl phosphate. The L-aspartate site is built by Arg164 and Arg227. Residues Leu266 and Pro267 each contribute to the carbamoyl phosphate site.

This sequence belongs to the aspartate/ornithine carbamoyltransferase superfamily. ATCase family. As to quaternary structure, heterododecamer (2C3:3R2) of six catalytic PyrB chains organized as two trimers (C3), and six regulatory PyrI chains organized as three dimers (R2).

The enzyme catalyses carbamoyl phosphate + L-aspartate = N-carbamoyl-L-aspartate + phosphate + H(+). The protein operates within pyrimidine metabolism; UMP biosynthesis via de novo pathway; (S)-dihydroorotate from bicarbonate: step 2/3. Catalyzes the condensation of carbamoyl phosphate and aspartate to form carbamoyl aspartate and inorganic phosphate, the committed step in the de novo pyrimidine nucleotide biosynthesis pathway. This chain is Aspartate carbamoyltransferase catalytic subunit, found in Bifidobacterium adolescentis (strain ATCC 15703 / DSM 20083 / NCTC 11814 / E194a).